A 443-amino-acid polypeptide reads, in one-letter code: Thymidine phosphorylase (443 aa).

The protein belongs to the thymidine/pyrimidine-nucleoside phosphorylase family. As to quaternary structure, homodimer.

It carries out the reaction thymidine + phosphate = 2-deoxy-alpha-D-ribose 1-phosphate + thymine. It functions in the pathway pyrimidine metabolism; dTMP biosynthesis via salvage pathway; dTMP from thymine: step 1/2. The enzymes which catalyze the reversible phosphorolysis of pyrimidine nucleosides are involved in the degradation of these compounds and in their utilization as carbon and energy sources, or in the rescue of pyrimidine bases for nucleotide synthesis. The sequence is that of Thymidine phosphorylase from Shewanella sediminis (strain HAW-EB3).